The following is a 63-amino-acid chain: Large ribosomal subunit protein bL32 (63 aa).

Belongs to the bacterial ribosomal protein bL32 family.

This is Large ribosomal subunit protein bL32 from Lactobacillus delbrueckii subsp. bulgaricus (strain ATCC 11842 / DSM 20081 / BCRC 10696 / JCM 1002 / NBRC 13953 / NCIMB 11778 / NCTC 12712 / WDCM 00102 / Lb 14).